Reading from the N-terminus, the 160-residue chain is MRALYPGSFDPLTLGHLDLIERGCSLFGEVVVAVLQNPGKSPAFSLDQRLEQITQATSHLQGVTVTSFNGLTVNCAREHHAQLILRGLRAMSDFEYELQIAHTNRSLDSEFETIFLSTAAHYSFLSSSVVKEVARFGGRVEHMVPAVVAEDLKRFFNSAL.

S8 lines the substrate pocket. ATP contacts are provided by residues 8 to 9 (SF) and H16. Substrate contacts are provided by K40, T72, and R86. Residues 87 to 89 (GLR), E97, and 122 to 128 (YSFLSSS) each bind ATP.

The protein belongs to the bacterial CoaD family. In terms of assembly, homohexamer. Mg(2+) is required as a cofactor.

It is found in the cytoplasm. The catalysed reaction is (R)-4'-phosphopantetheine + ATP + H(+) = 3'-dephospho-CoA + diphosphate. It participates in cofactor biosynthesis; coenzyme A biosynthesis; CoA from (R)-pantothenate: step 4/5. Reversibly transfers an adenylyl group from ATP to 4'-phosphopantetheine, yielding dephospho-CoA (dPCoA) and pyrophosphate. The chain is Phosphopantetheine adenylyltransferase from Synechococcus sp. (strain CC9311).